Consider the following 197-residue polypeptide: Ribonuclease HII (197 aa).

The RNase H type-2 domain maps to 9-197 (ELIAGVDEVG…APVKKALEQF (189 aa)). Positions 15, 16, and 107 each coordinate a divalent metal cation.

This sequence belongs to the RNase HII family. The cofactor is Mn(2+). Mg(2+) is required as a cofactor.

The protein localises to the cytoplasm. The catalysed reaction is Endonucleolytic cleavage to 5'-phosphomonoester.. In terms of biological role, endonuclease that specifically degrades the RNA of RNA-DNA hybrids. In Haemophilus influenzae (strain PittGG), this protein is Ribonuclease HII.